The chain runs to 614 residues: Probable Xaa-Pro aminopeptidase P (614 aa).

Residues Asp411, Asp422, Glu520, and Glu534 each contribute to the Mn(2+) site.

This sequence belongs to the peptidase M24B family. Mn(2+) serves as cofactor.

It carries out the reaction Release of any N-terminal amino acid, including proline, that is linked to proline, even from a dipeptide or tripeptide.. Its function is as follows. Catalyzes the removal of a penultimate prolyl residue from the N-termini of peptides. The sequence is that of Probable Xaa-Pro aminopeptidase P (AMPP) from Sordaria macrospora (strain ATCC MYA-333 / DSM 997 / K(L3346) / K-hell).